Here is a 389-residue protein sequence, read N- to C-terminus: Chalcone synthase 2 (389 aa).

Cys-164 is a catalytic residue.

The protein belongs to the thiolase-like superfamily. Chalcone/stilbene synthases family.

It catalyses the reaction (E)-4-coumaroyl-CoA + 3 malonyl-CoA + 3 H(+) = 2',4,4',6'-tetrahydroxychalcone + 3 CO2 + 4 CoA. Its pathway is secondary metabolite biosynthesis; flavonoid biosynthesis. Its function is as follows. The primary product of this enzyme is 4,2',4',6'-tetrahydroxychalcone (also termed naringenin-chalcone or chalcone) which can under specific conditions spontaneously isomerize into naringenin. In Pisum sativum (Garden pea), this protein is Chalcone synthase 2 (CHS2).